Reading from the N-terminus, the 313-residue chain is Olfactory receptor 4M2 (313 aa).

Over 1–25 the chain is Cytoplasmic; sequence METANYTKVTEFVLTGLSQTPEVQL. Residues 26 to 46 traverse the membrane as a helical segment; sequence VLFVIFLSFYLFILPGNILII. Topologically, residues 47–57 are extracellular; the sequence is CTISLDPHLTS. A helical transmembrane segment spans residues 58–78; that stretch reads PMYFLLANLAFLDIWYSSITA. Topologically, residues 79 to 97 are cytoplasmic; the sequence is PEMLIDFFVERKIISFDEC. A disulfide bond links Cys97 and Cys179. A helical membrane pass occupies residues 98 to 118; sequence IAQLFFLHFAGASEMFLLTVM. Residues 119-142 are Extracellular-facing; it reads AFDLYTAICRPLHYATIMNQRLCC. Residues 143–163 form a helical membrane-spanning segment; that stretch reads ILVALSWRGGFIHSIIQVALI. Over 164–204 the chain is Cytoplasmic; that stretch reads VRLPFCGPNELDSYFCDITQVVRIACANTFPEELVMICSSG. A helical transmembrane segment spans residues 205 to 225; the sequence is LISVVCLIALLMSYAFLLALL. At 226-238 the chain is on the extracellular side; that stretch reads KKLSGSGENTNRA. A helical transmembrane segment spans residues 239–259; the sequence is VSTCYSHITIVVLMFGPSIYI. Topologically, residues 260–270 are cytoplasmic; that stretch reads YARPFDSFSLD. Residues 271 to 291 form a helical membrane-spanning segment; the sequence is KVVSVFNTLIFPLHNPIIYTL. Residues 292-313 are Extracellular-facing; it reads RNKEVKAAMRKLVTKYILCKEK.

It belongs to the G-protein coupled receptor 1 family.

Its subcellular location is the membrane. Functionally, odorant receptor. In Homo sapiens (Human), this protein is Olfactory receptor 4M2.